The primary structure comprises 279 residues: MNNEEQKLIENLFSRLYKAESDFPNRDKNAEQLINDLLRKQPSSSYYMTQTILVQEMIIEKLNAKILELEKNLSMNEKQTKHGSFGFLSGLFKSKKKEIDACNQGNKAGNHKDDISKRPIMDCLNNNVGKTTSVLGRETIYNTSNNSMSGFLSGSLQTAAGVAGGMVMANLLMNLFQHKRPEEEMIDQISHNPTPVSADSDDLVNNNMNNDKHDVASSDYINDEHEYGEHVKNDHQLHDSPLCSDVSDSTSNNNYDESLNFSNDNNNSSFNDFDDDNFI.

The segment at 233-279 is disordered; the sequence is NDHQLHDSPLCSDVSDSTSNNNYDESLNFSNDNNNSSFNDFDDDNFI. The span at 246–259 shows a compositional bias: polar residues; the sequence is VSDSTSNNNYDESL. A compositionally biased stretch (low complexity) spans 260-271; sequence NFSNDNNNSSFN.

This is an uncharacterized protein from Buchnera aphidicola subsp. Baizongia pistaciae (strain Bp).